A 512-amino-acid chain; its full sequence is Glutathione-binding protein GsiB (512 aa).

Positions 1–26 (MTQFITHKWLAALGLASSIAAFPALA) are cleaved as a signal peptide.

This sequence belongs to the bacterial solute-binding protein 5 family. The complex is composed of two ATP-binding proteins (GsiA), two transmembrane proteins (GsiC and GsiD) and a solute-binding protein (GsiB).

The protein resides in the periplasm. Its function is as follows. Part of the ABC transporter complex GsiABCD involved in glutathione import. Binds glutathione. The protein is Glutathione-binding protein GsiB of Salmonella paratyphi A (strain ATCC 9150 / SARB42).